A 60-amino-acid chain; its full sequence is Prokaryotic ubiquitin-like protein UBact (60 aa).

Residues 1–60 (MPERKTQPTTDQPWTKPNDGGDESGPRSPEVERPNTRDLLERMKRVDPRQARRYRQRSGE) are disordered. The segment covering 29–50 (PEVERPNTRDLLERMKRVDPRQ) has biased composition (basic and acidic residues). The span at 51-60 (ARRYRQRSGE) shows a compositional bias: basic residues. Glutamate 60 is covalently cross-linked (Isoglutamyl lysine isopeptide (Glu-Lys) (interchain with K-? in acceptor proteins)).

The protein belongs to the ubiquitin-like protein UBact family.

Its function is as follows. May function as a protein modifier covalently attached to lysine residues of substrate proteins. This may serve to target the modified proteins for degradation by proteasomes. This chain is Prokaryotic ubiquitin-like protein UBact, found in Fraserbacteria sp. (strain RBG_16_55_9).